We begin with the raw amino-acid sequence, 2181 residues long: Genome polyprotein (2181 aa).

A lipid anchor (N-myristoyl glycine; by host) is attached at Gly80. Interaction with host receptor ANTXR1 stretches follow at residues 316–337 (DYRT…PPNW) and 761–772 (RFGLYANPSGSG). One can recognise an SF3 helicase domain in the interval 1165-1333 (LGKTNLAQSL…YKKHTRLNFD (169 aa)). 1197–1204 (GKPGCGKS) contributes to the ATP binding site. Residues 1472 to 1500 (EETESEGSVKAPRSENAYDGPKKNSKPPG) are disordered. Position 1489 is an O-(5'-phospho-RNA)-tyrosine (Tyr1489). The region spanning 1511–1704 (NVDMGFEAAV…AGTYISKLGL (194 aa)) is the Peptidase C3 domain. The active-site For protease 3C activity and deubiquitinase activity is the His1556. Asp1592 serves as the catalytic For protease 3C activity. The active-site For protease 3C activity and deubiquitinase activity is the Cys1668. Residues 1950–2068 (KNTYDVDYSA…GTDYDLDFNE (119 aa)) enclose the RdRp catalytic domain. Active-site for RdRp activity residues include Asp1956 and Asp2054.

In terms of assembly, interacts with host entry receptor ANTRX1. Interacts with host IRF3; this interaction is involved in the suppression of IRF3 and IRF7 expression and phosphorylation by the virus. Interacts with host IRF7; this interaction is involved in the suppression of IRF3 and IRF7 expression and phosphorylation by the virus. Interacts with host MAVS; this interaction allows the cleavage of MAVS and subsequent suppression of host immunity. Interacts with host TRIF; this interaction allows the cleavage of TRIF and subsequent suppression of host immunity. Interacts with host TANK; this interaction allows the cleavage of TANK and subsequent suppression of host immunity. Interacts with host RIGI. Interacts with host TBK1. Interacts with host TRAF3. Specific enzymatic cleavages by the viral protease in vivo yield a variety of precursors and mature proteins. The polyprotein seems to be cotranslationally cleaved at the 2A/2B junction by a ribosomal skip from one codon to the next without formation of a peptide bond. This process would release the P1-2A peptide from the translational complex. In terms of processing, during virion maturation, immature virions are rendered infectious following cleavage of VP0 into VP4 and VP2. This maturation seems to be an autocatalytic event triggered by the presence of RNA in the capsid and is followed by a conformational change of the particle. Post-translationally, myristoylation is required during RNA encapsidation and formation of the mature virus particle. Uridylylated by the polymerase and is covalently linked to the 5'-end of genomic RNA. This uridylylated form acts as a nucleotide-peptide primer for the polymerase.

It localises to the virion. The protein resides in the host cytoplasm. The protein localises to the host nucleus. Its subcellular location is the host nucleolus. It is found in the host cytoplasmic vesicle membrane. The enzyme catalyses RNA(n) + a ribonucleoside 5'-triphosphate = RNA(n+1) + diphosphate. The catalysed reaction is Selective cleavage of Gln-|-Gly bond in the poliovirus polyprotein. In other picornavirus reactions Glu may be substituted for Gln, and Ser or Thr for Gly.. It catalyses the reaction Thiol-dependent hydrolysis of ester, thioester, amide, peptide and isopeptide bonds formed by the C-terminal Gly of ubiquitin (a 76-residue protein attached to proteins as an intracellular targeting signal).. It carries out the reaction ATP + H2O = ADP + phosphate + H(+). Functionally, forms an icosahedral capsid of pseudo T=3 symmetry with capsid proteins VP2 and VP3. Together they form an icosahedral capsid composed of 60 copies of each VP1, VP2, and VP3, with a diameter of approximately 325 Angstroms. VP4 lies on the inner surface of the protein shell formed by VP1, VP2 and VP3. All the three latter proteins contain a beta-sheet structure called beta-barrel jelly roll. VP1 is situated at the 12 fivefold axes, whereas VP2 and VP3 are located at the quasi-sixfold axes. Binds the host receptor ANTXR1 for attachment and uncoating (entry). Forms an icosahedral capsid of pseudo T=3 symmetry with capsid proteins VP2 and VP3. Together they form an icosahedral capsid composed of 60 copies of each VP1, VP2, and VP3, with a diameter of approximately 270 Angstroms. VP4 lies on the inner surface of the protein shell formed by VP1, VP2 and VP3. All the three latter proteins contain a beta-sheet structure called beta-barrel jelly roll. VP1 is situated at the 12 fivefold axes, whereas VP2 and VP3 are located at the quasi-sixfold axes. Binds the host receptor ANTXR1 for attachment and uncoating (entry). In terms of biological role, forms an icosahedral capsid of pseudo T=3 symmetry with capsid proteins VP2 and VP3. Together they form an icosahedral capsid composed of 60 copies of each VP1, VP2, and VP3, with a diameter of approximately 270 Angstroms. VP4 lies on the inner surface of the protein shell formed by VP1, VP2 and VP3. All the three latter proteins contain a beta-sheet structure called beta-barrel jelly roll. VP1 is situated at the 12 fivefold axes, whereas VP2 and VP3 are located at the quasi-sixfold axes. Vp3 also seems to be involved in the binding to host receptor ANTXR1 for attachment and uncoating (entry). Its function is as follows. Lies on the inner surface of the capsid shell. After binding to the host receptor, the capsid undergoes conformational changes. Capsid protein VP4 is released, capsid protein VP1 N-terminus is externalized, and together, they shape a pore in the host membrane through which the viral genome is translocated into the host cell cytoplasm. After genome has been released, the channel shrinks. Functionally, VP0 precursor is a component of immature procapsids. Mediates self-processing of the polyprotein by a translational effect termed 'ribosome skipping'. Mechanistically, 2A-mediated cleavage occurs between the C-terminal glycine and the proline of the downstream protein 2B. In terms of biological role, plays an essential role in the virus replication cycle by acting as a viroporin. Creates a pore in the host endoplasmic reticulum and as a consequence releases Ca2+ in the cytoplasm of infected cell. In turn, high levels of cytoplasmic calcium may trigger membrane trafficking and transport of viral ER-associated proteins to viroplasms, sites of viral genome replication. Its function is as follows. Associates with and induces structural rearrangements of intracellular membranes. Functionally, covalently linked to the 5'-end of both the positive-strand and negative-strand genomic RNAs. Acts as a genome-linked replication primer. Cysteine protease that generates mature viral proteins from the precursor polyprotein. Inactivates crucial host adapter molecules in order to suppress antiviral type-I interferon (type-I IFN) and NF-kappaB production to escape host antiviral innate immune responses. Deubiquitinase that acts on both lysine-48- and lysine-63-linked polyubiquitin chains and inhibits the ubiquitination of the ATP-dependent RNA helicase RIGI, TANK-binding kinase 1 (TBK1), and TNF receptor-associated factor 3 (TRAF3), thereby blocking the expression of IFN-beta and IFN stimulated gene 54 (ISG54). Induces host IRF3 and IRF7 degradation thereby suppressing IRF3- and IRF7-induced type-I IFN production. Also decreases host IRF3 phosphorylation leading to negligible IRF3 activation. Cleaves host MAVS, TRIF and TANK, which are then unable to regulate pattern recognition receptor (PRR)-mediated type-I IFN production. Inhibits the integrated stress response (ISR) in the infected cell by disrupting eIF4GI-G3BP1 interaction. Stress granule formation is thus inhibited. In terms of biological role, replicates the genomic and antigenomic RNAs by recognizing replications specific signals. Performs VPg uridylylation. This chain is Genome polyprotein, found in Sus scrofa (Pig).